Consider the following 320-residue polypeptide: Probable NAD(P)H-dependent D-xylose reductase xyl1 (320 aa).

Catalysis depends on tyrosine 50, which acts as the Proton donor. A substrate-binding site is contributed by histidine 112. Residues 167–168, 216–225, and 272–282 each bind NAD(+); these read SN, SSFGPLSFLE, and KSNNPTRLSQN.

The protein belongs to the aldo/keto reductase family.

The enzyme catalyses xylitol + NAD(+) = D-xylose + NADH + H(+). The catalysed reaction is xylitol + NADP(+) = D-xylose + NADPH + H(+). Its pathway is carbohydrate metabolism; D-xylose degradation. Its function is as follows. Catalyzes the initial reaction in the xylose utilization pathway by reducing D-xylose into xylitol. Xylose is a major component of hemicelluloses such as xylan. Most fungi utilize D-xylose via three enzymatic reactions, xylose reductase (XR), xylitol dehydrogenase (XDH), and xylulokinase, to form xylulose 5-phosphate, which enters pentose phosphate pathway. The sequence is that of Probable NAD(P)H-dependent D-xylose reductase xyl1 (xyl1) from Aspergillus terreus (strain NIH 2624 / FGSC A1156).